Reading from the N-terminus, the 101-residue chain is Nucleoid-associated protein Acid345_1974 (101 aa).

It belongs to the YbaB/EbfC family. Homodimer.

It is found in the cytoplasm. It localises to the nucleoid. In terms of biological role, binds to DNA and alters its conformation. May be involved in regulation of gene expression, nucleoid organization and DNA protection. This is Nucleoid-associated protein Acid345_1974 from Koribacter versatilis (strain Ellin345).